A 351-amino-acid polypeptide reads, in one-letter code: Selenide, water dikinase (351 aa).

Sec15 is an active-site residue. Position 15 (Sec15) is a non-standard amino acid, selenocysteine. ATP is bound by residues Lys18 and 47–49 (DNE). Asp50 contacts Mg(2+). ATP-binding positions include Asp67, Asp90, and 138 to 140 (GHS). Asp90 serves as a coordination point for Mg(2+). Asp227 serves as a coordination point for Mg(2+).

This sequence belongs to the selenophosphate synthase 1 family. Class I subfamily. Homodimer. The cofactor is Mg(2+).

The catalysed reaction is hydrogenselenide + ATP + H2O = selenophosphate + AMP + phosphate + 2 H(+). Functionally, synthesizes selenophosphate from selenide and ATP. This Nitratidesulfovibrio vulgaris (strain DP4) (Desulfovibrio vulgaris) protein is Selenide, water dikinase.